Consider the following 370-residue polypeptide: Aminomethyltransferase (370 aa).

The protein belongs to the GcvT family. In terms of assembly, the glycine cleavage system is composed of four proteins: P, T, L and H.

The enzyme catalyses N(6)-[(R)-S(8)-aminomethyldihydrolipoyl]-L-lysyl-[protein] + (6S)-5,6,7,8-tetrahydrofolate = N(6)-[(R)-dihydrolipoyl]-L-lysyl-[protein] + (6R)-5,10-methylene-5,6,7,8-tetrahydrofolate + NH4(+). Functionally, the glycine cleavage system catalyzes the degradation of glycine. The chain is Aminomethyltransferase from Clostridium botulinum (strain Okra / Type B1).